A 299-amino-acid chain; its full sequence is MHVVILGSAAGGGVPQWNCRCSICSLAWAGDSRVRPRTQSSIAVSPDGERWLLLNASPDIRQQIQANPQMHPREGLRHSPIHAVLLTNGDVDHVAGLLTLREGQPFSLYATPGILASVSDNRVFDVMAAEVVKRQTIALNETFEPVPGLSVTLFSVPGKVPLWLEDASMEIGAETETTVGTMIEAGGKRLAYIPGCAGVTEDLKARIAGADALLFDGTVLEDDDMIRAGVGTKTGWRMGHIQMNGETGSIASLADVEIGRRVFVHINNTNPVLIEDSSERASVEARGWTVAHDGLTLDL.

It belongs to the PqqB family.

It participates in cofactor biosynthesis; pyrroloquinoline quinone biosynthesis. Functionally, may be involved in the transport of PQQ or its precursor to the periplasm. The chain is Coenzyme PQQ synthesis protein B from Methylorubrum extorquens (strain CM4 / NCIMB 13688) (Methylobacterium extorquens).